The sequence spans 361 residues: tRNA 2-selenouridine synthase (361 aa).

The Rhodanese domain maps to leucine 11 to tryptophan 134. Cysteine 94 (S-selanylcysteine intermediate) is an active-site residue.

It belongs to the SelU family. As to quaternary structure, monomer.

It catalyses the reaction 5-methylaminomethyl-2-thiouridine(34) in tRNA + selenophosphate + (2E)-geranyl diphosphate + H2O + H(+) = 5-methylaminomethyl-2-selenouridine(34) in tRNA + (2E)-thiogeraniol + phosphate + diphosphate. It carries out the reaction 5-methylaminomethyl-2-thiouridine(34) in tRNA + (2E)-geranyl diphosphate = 5-methylaminomethyl-S-(2E)-geranyl-thiouridine(34) in tRNA + diphosphate. The catalysed reaction is 5-methylaminomethyl-S-(2E)-geranyl-thiouridine(34) in tRNA + selenophosphate + H(+) = 5-methylaminomethyl-2-(Se-phospho)selenouridine(34) in tRNA + (2E)-thiogeraniol. The enzyme catalyses 5-methylaminomethyl-2-(Se-phospho)selenouridine(34) in tRNA + H2O = 5-methylaminomethyl-2-selenouridine(34) in tRNA + phosphate. Its function is as follows. Involved in the post-transcriptional modification of the uridine at the wobble position (U34) of tRNA(Lys), tRNA(Glu) and tRNA(Gln). Catalyzes the conversion of 2-thiouridine (S2U-RNA) to 2-selenouridine (Se2U-RNA). Acts in a two-step process involving geranylation of 2-thiouridine (S2U) to S-geranyl-2-thiouridine (geS2U) and subsequent selenation of the latter derivative to 2-selenouridine (Se2U) in the tRNA chain. This chain is tRNA 2-selenouridine synthase, found in Salmonella arizonae (strain ATCC BAA-731 / CDC346-86 / RSK2980).